We begin with the raw amino-acid sequence, 602 residues long: Multicopper oxidase aurL2 (602 aa).

Residues 1–17 (MLFRFLALLPFVAGAFA) form the signal peptide. 2 Plastocyanin-like domains span residues 38-149 (DIKI…VRDA) and 160-317 (IPLL…KYRC). 2 N-linked (GlcNAc...) asparagine glycosylation sites follow: Asn-52 and Asn-80. Cu cation contacts are provided by His-84, His-86, His-130, and His-132. Asn-201, Asn-247, Asn-337, Asn-383, Asn-387, Asn-419, and Asn-424 each carry an N-linked (GlcNAc...) asparagine glycan. Residues 421-556 (TTPNYTLALE…QVMGMATVWV (136 aa)) form the Plastocyanin-like 3 domain. His-469 lines the Cu cation pocket. Residues Asn-482 and Asn-486 are each glycosylated (N-linked (GlcNAc...) asparagine).

This sequence belongs to the multicopper oxidase family.

It participates in pigment biosynthesis. In terms of biological role, multicopper oxidase; part of the gene cluster that mediates the biosynthesis of aurofusarin, a red mycelium pigment which is acting as a mycotoxin. The first step is performed by the polyketide synthase which condenses one acetyl-CoA and 6 malonyl-CoA units to form the first intermediate, the cyclic heptaketide and yellow pigment YWA1. The C2 hydroxyl group in the pyrone ring of YWA1 is probably formed during ring closure by an aldol-type cyclization reaction. The dehydratase aurZ then acts as the first tailoring enzyme in the aurofusarin biosynthetic pathway by converting YWA1 to nor-rubrofusarin. Nor-rubrofusarin is then methylated to rubrofusarin by the O-methyltransferase aurJ. Rubrofusarin is then transported across the plasma membrane by the rubrofusarin-specific pump aurT for further enzymatic processing by the extracellular complex composed of GIP1, aurF, aurO and aurS to yield aurofusarin. The chain is Multicopper oxidase aurL2 (aurL2) from Gibberella zeae (strain ATCC MYA-4620 / CBS 123657 / FGSC 9075 / NRRL 31084 / PH-1) (Wheat head blight fungus).